Consider the following 348-residue polypeptide: Phosphate acyltransferase (348 aa).

Belongs to the PlsX family. Homodimer. Probably interacts with PlsY.

Its subcellular location is the cytoplasm. It carries out the reaction a fatty acyl-[ACP] + phosphate = an acyl phosphate + holo-[ACP]. It functions in the pathway lipid metabolism; phospholipid metabolism. Functionally, catalyzes the reversible formation of acyl-phosphate (acyl-PO(4)) from acyl-[acyl-carrier-protein] (acyl-ACP). This enzyme utilizes acyl-ACP as fatty acyl donor, but not acyl-CoA. This Nitrosomonas europaea (strain ATCC 19718 / CIP 103999 / KCTC 2705 / NBRC 14298) protein is Phosphate acyltransferase.